A 458-amino-acid chain; its full sequence is Sphingomyelinase DDB_G0288017 (458 aa).

Residues 91-111 are disordered; it reads NKKAKSPPPPSSLKQQNLHNN. Glu-135 contacts Mg(2+). His-447 serves as the catalytic Proton acceptor.

It belongs to the neutral sphingomyelinase family. Requires Mg(2+) as cofactor.

The enzyme catalyses a sphingomyelin + H2O = phosphocholine + an N-acylsphing-4-enine + H(+). It functions in the pathway lipid metabolism; sphingolipid metabolism. Its function is as follows. Catalyzes the hydrolysis of sphingomyelin to form ceramide and phosphocholine. The chain is Sphingomyelinase DDB_G0288017 from Dictyostelium discoideum (Social amoeba).